The chain runs to 287 residues: MEIVRDIKTMREKVAEMKRQGKSVGLVPTMGYLHEGHLALIDTARKENDVVVVSDFVNPLQFGPNEDYLVYPRDMDRDAQLCSEHGVDFLFVPTVEEMYPKKGNQVDVFVDVKHLDENLCGRFRPGHFRGVVTVVTKLFNIVSPNRAYFGMKDIQQLRIIEEMVNDLNMNIEIVPVPTVREPSGLALSSRNTYLSAEEREKAASIYKSLLMAKDLILEKGVISTAEVIGTCTRFLSQQGFKVQYFQLVDYDTLELLPKIEPPQKIIIATAVFLGKVRLIDNLVIEVR.

30 to 37 (MGYLHEGH) is a binding site for ATP. The Proton donor role is filled by His-37. Gln-61 is a binding site for (R)-pantoate. Gln-61 is a beta-alanine binding site. 150-153 (GMKD) serves as a coordination point for ATP. Residue Gln-156 participates in (R)-pantoate binding. ATP contacts are provided by residues Val-179 and 187 to 190 (LSSR).

This sequence belongs to the pantothenate synthetase family. In terms of assembly, homodimer.

It is found in the cytoplasm. The catalysed reaction is (R)-pantoate + beta-alanine + ATP = (R)-pantothenate + AMP + diphosphate + H(+). It functions in the pathway cofactor biosynthesis; (R)-pantothenate biosynthesis; (R)-pantothenate from (R)-pantoate and beta-alanine: step 1/1. Functionally, catalyzes the condensation of pantoate with beta-alanine in an ATP-dependent reaction via a pantoyl-adenylate intermediate. This chain is Pantothenate synthetase, found in Coprothermobacter proteolyticus (strain ATCC 35245 / DSM 5265 / OCM 4 / BT).